Here is a 69-residue protein sequence, read N- to C-terminus: uncharacterized protein (69 aa).

In terms of assembly, interacts with the RNA polymerase core.

This is an uncharacterized protein from Bacillus subtilis (strain 168).